The chain runs to 240 residues: MILLISDLHLQEERPDITRAFLDLLDGRARHAKALYILGDFFEAWIGDDAMTPFQQSICQAVRQLSDSGTAVYLMHGNRDFLIGEGFCKAAGCTLLADPSVISLGGEQVLLMHGDTLCTRDIGYMKMRRYLRNPLSLWILRHLPLATRQKLARKLRSESRAQTRMKATEIVDVTPEEVPAVMAAHGVKTLVHGHTHRPAIHKLVVNGEPARRIVLGDWDRRGWTLQVDAQGFQLEPFEFS.

5 residues coordinate Mn(2+): Asp-7, His-9, Asp-40, Asn-78, and His-113. 78 to 79 serves as a coordination point for substrate; the sequence is NR. Residues Asp-121, Ser-159, Thr-163, Lys-166, and His-194 each contribute to the substrate site. Mn(2+)-binding residues include His-194 and His-196.

The protein belongs to the LpxH family. Mn(2+) serves as cofactor.

The protein resides in the cell inner membrane. It catalyses the reaction UDP-2-N,3-O-bis[(3R)-3-hydroxytetradecanoyl]-alpha-D-glucosamine + H2O = 2-N,3-O-bis[(3R)-3-hydroxytetradecanoyl]-alpha-D-glucosaminyl 1-phosphate + UMP + 2 H(+). The protein operates within glycolipid biosynthesis; lipid IV(A) biosynthesis; lipid IV(A) from (3R)-3-hydroxytetradecanoyl-[acyl-carrier-protein] and UDP-N-acetyl-alpha-D-glucosamine: step 4/6. Functionally, hydrolyzes the pyrophosphate bond of UDP-2,3-diacylglucosamine to yield 2,3-diacylglucosamine 1-phosphate (lipid X) and UMP by catalyzing the attack of water at the alpha-P atom. Involved in the biosynthesis of lipid A, a phosphorylated glycolipid that anchors the lipopolysaccharide to the outer membrane of the cell. The polypeptide is UDP-2,3-diacylglucosamine hydrolase (Pseudomonas putida (strain W619)).